Here is a 373-residue protein sequence, read N- to C-terminus: Indole glucosinolate O-methyltransferase 2 (373 aa).

S-adenosyl-L-homocysteine-binding residues include Gly-217, Asp-240, Asp-260, Met-261, and Lys-274. His-278 functions as the Proton acceptor in the catalytic mechanism.

Belongs to the class I-like SAM-binding methyltransferase superfamily. Cation-independent O-methyltransferase family.

The protein operates within secondary metabolite biosynthesis. Its function is as follows. Involved in indole glucosinolate biosynthesis. Catalyzes methoxylation reactions of the glucosinolate indole ring. Converts the hydroxy intermediates 4-hydroxy-indol-3-yl-methylglucosinolate (4OH-I3M) and 1-hydroxy-indol-3-yl-methylglucosinolate (1OH-I3M) to 4-methoxy-indol-3-yl-methylglucosinolate (4MO-I3M) and 1-methoxy-indol-3-yl-methylglucosinolate (1MO-I3M), respectively. The sequence is that of Indole glucosinolate O-methyltransferase 2 from Arabidopsis thaliana (Mouse-ear cress).